A 125-amino-acid polypeptide reads, in one-letter code: Small ribosomal subunit protein bS6 (125 aa).

The tract at residues 100–125 (SPMVKAREERKPLTEVENNDFEDAEE) is disordered. Residues 104 to 113 (KAREERKPLT) are compositionally biased toward basic and acidic residues. Positions 116–125 (ENNDFEDAEE) are enriched in acidic residues.

Belongs to the bacterial ribosomal protein bS6 family.

Functionally, binds together with bS18 to 16S ribosomal RNA. This is Small ribosomal subunit protein bS6 from Histophilus somni (strain 129Pt) (Haemophilus somnus).